Consider the following 609-residue polypeptide: All-trans-retinol 13,14-reductase (609 aa).

An N-terminal signal peptide occupies residues 1–21; it reads MWITALLLVVLLLVVVHRVYV.

This sequence belongs to the carotenoid/retinoid oxidoreductase family. CrtISO subfamily. NAD(+) serves as cofactor. The cofactor is NADP(+). Requires FAD as cofactor. As to expression, highly expressed in liver, kidney and heart.

The protein localises to the endoplasmic reticulum membrane. The enzyme catalyses all-trans-13,14-dihydroretinol + A = all-trans-retinol + AH2. Functionally, catalyzes the saturation of all-trans-retinol to all-trans-13,14-dihydroretinol. Does not exhibit any activity toward all-trans-retinoic acid, nor 9-cis, 11-cis or 13-cis-retinol isomers. May play a role in the metabolism of vitamin A. Independently of retinol conversion, may regulate liver metabolism upstream of MLXIPL/ChREBP. May play a role in adipocyte differentiation. The polypeptide is All-trans-retinol 13,14-reductase (Retsat) (Rattus norvegicus (Rat)).